A 452-amino-acid polypeptide reads, in one-letter code: tRNA modification GTPase MnmE (452 aa).

Arg-24, Glu-81, and Lys-120 together coordinate (6S)-5-formyl-5,6,7,8-tetrahydrofolate. The TrmE-type G domain occupies 217-373; sequence GIKTAIVGKT…LIMKIEQMHI (157 aa). K(+) is bound at residue Asn-227. GTP-binding positions include 227–232, 246–252, and 271–274; these read NVGKSS, TDIHGTT, and DTAG. Residue Ser-231 coordinates Mg(2+). K(+) contacts are provided by Thr-246, Ile-248, and Thr-251. Thr-252 is a Mg(2+) binding site. Position 452 (Lys-452) interacts with (6S)-5-formyl-5,6,7,8-tetrahydrofolate.

Belongs to the TRAFAC class TrmE-Era-EngA-EngB-Septin-like GTPase superfamily. TrmE GTPase family. In terms of assembly, homodimer. Heterotetramer of two MnmE and two MnmG subunits. Requires K(+) as cofactor.

It localises to the cytoplasm. Its function is as follows. Exhibits a very high intrinsic GTPase hydrolysis rate. Involved in the addition of a carboxymethylaminomethyl (cmnm) group at the wobble position (U34) of certain tRNAs, forming tRNA-cmnm(5)s(2)U34. This chain is tRNA modification GTPase MnmE, found in Mesoplasma florum (strain ATCC 33453 / NBRC 100688 / NCTC 11704 / L1) (Acholeplasma florum).